The chain runs to 314 residues: Olfactory receptor 9A1 (314 aa).

Residues 1-24 lie on the Extracellular side of the membrane; it reads MLGNYSSATEFFLLGFPGSQEVCR. N-linked (GlcNAc...) asparagine glycosylation is present at Asn4. Residues 25–45 form a helical membrane-spanning segment; sequence ILFATFFLLYAVTVMGNVVII. Residues 46-64 lie on the Cytoplasmic side of the membrane; sequence ITVCVDKCLQSPIYFFLGH. Residues 65–85 traverse the membrane as a helical segment; the sequence is LCVLEILITSTAVPFMLWGLL. The Extracellular segment spans residues 86–99; sequence LPSTQIMSLTACAA. A disulfide bridge connects residues Cys97 and Cys179. The chain crosses the membrane as a helical span at residues 100–120; sequence QLYLYLSLGTLELALMGVMAV. The Cytoplasmic segment spans residues 121 to 140; the sequence is DRYVAVCNPLRYNIIMNSST. Residues 141–161 form a helical membrane-spanning segment; it reads FIWVIIVSWVLGFLSEIWPVY. Residues 162–196 are Extracellular-facing; it reads ATFQLTFCKSSVLDHFYCDRGQLLKVSCEDTLFRE. Residues 197–217 traverse the membrane as a helical segment; it reads FILFLMAVFIIIGSLIPTIVS. Over 218-239 the chain is Cytoplasmic; that stretch reads YTYIISTNLKIPSASGWRKSFS. A helical membrane pass occupies residues 240-260; the sequence is TCASHFTYVVIGYGSCLFLYV. The Extracellular segment spans residues 261–271; it reads KPKQTQAAEYN. A helical transmembrane segment spans residues 272–292; sequence RVVSLLVLVVTPFLNPFIFTL. At 293-314 the chain is on the cytoplasmic side; sequence RNDKFIQAFGDGMKHCYKLLKN.

Belongs to the G-protein coupled receptor 1 family.

It is found in the cell membrane. Odorant receptor. The protein is Olfactory receptor 9A1 (OR9A1P) of Homo sapiens (Human).